An 85-amino-acid chain; its full sequence is U4-theraphotoxin-Hhn1a (85 aa).

The first 22 residues, 1 to 22 (MKVTLIAILTCAAVLVLHTTAA), serve as a signal peptide directing secretion. A propeptide spanning residues 23-48 (EEFEAESQLMEVGMPDTELAAVDEER) is cleaved from the precursor. 3 cysteine pairs are disulfide-bonded: cysteine 52–cysteine 66, cysteine 56–cysteine 77, and cysteine 71–cysteine 82.

This sequence belongs to the neurotoxin 12 (Hwtx-2) family. 02 (Hwtx-2) subfamily. Monomer. In terms of tissue distribution, expressed by the venom gland.

Its subcellular location is the secreted. In terms of biological role, neurotoxin active on both insects and mammals. This chain is U4-theraphotoxin-Hhn1a, found in Cyriopagopus hainanus (Chinese bird spider).